The primary structure comprises 210 residues: Probable sporulation protein YtaF (210 aa).

6 helical membrane passes run 6–26 (ILLL…TYGL), 36–56 (ILVI…IGSF), 69–89 (LGGL…FKPA), 129–149 (VING…AFGA), 162–184 (VMSI…AGHF), and 190–210 (WIDK…LWKL).

The protein localises to the cell membrane. In Bacillus subtilis (strain 168), this protein is Probable sporulation protein YtaF (ytaF).